The following is a 964-amino-acid chain: A-type ATP synthase subunit A (964 aa).

One can recognise a DOD-type homing endonuclease domain in the interval 392-518 (FLGYLMANGT…LSYLFAKLGI (127 aa)).

The protein belongs to the ATPase alpha/beta chains family. Has multiple subunits with at least A(3), B(3), C, D, E, F, H, I and proteolipid K(x). In terms of processing, this protein undergoes a protein self splicing that involves a post-translational excision of the VDE intervening region (intein) followed by peptide ligation.

Its subcellular location is the cell membrane. It carries out the reaction ATP + H2O + 4 H(+)(in) = ADP + phosphate + 5 H(+)(out). Its function is as follows. Component of the A-type ATP synthase that produces ATP from ADP in the presence of a proton gradient across the membrane. The A chain is the catalytic subunit. The protein is A-type ATP synthase subunit A of Pyrococcus horikoshii (strain ATCC 700860 / DSM 12428 / JCM 9974 / NBRC 100139 / OT-3).